A 475-amino-acid chain; its full sequence is Glycogen synthase (475 aa).

K15 is an ADP-alpha-D-glucose binding site.

This sequence belongs to the glycosyltransferase 1 family. Bacterial/plant glycogen synthase subfamily.

It catalyses the reaction [(1-&gt;4)-alpha-D-glucosyl](n) + ADP-alpha-D-glucose = [(1-&gt;4)-alpha-D-glucosyl](n+1) + ADP + H(+). It functions in the pathway glycan biosynthesis; glycogen biosynthesis. In terms of biological role, synthesizes alpha-1,4-glucan chains using ADP-glucose. This Anaeromyxobacter sp. (strain K) protein is Glycogen synthase.